A 246-amino-acid chain; its full sequence is ATP synthase subunit a (246 aa).

The next 5 membrane-spanning stretches (helical) occupy residues 34–54 (GQTMITTWVVMLLLIGLTFIG), 92–112 (WVPLIGTIFLFVLFANWLGQL), 130–150 (DINTTVALSLIALVSYIYAGL), 155–175 (FGYFKHYFESPILAAVWVLEF), and 196–216 (VVAVLILLVPILVPVPLMILF).

It belongs to the ATPase A chain family. In terms of assembly, F-type ATPases have 2 components, CF(1) - the catalytic core - and CF(0) - the membrane proton channel. CF(1) has five subunits: alpha(3), beta(3), gamma(1), delta(1), epsilon(1). CF(0) has four main subunits: a, b, b' and c.

It localises to the cell inner membrane. Functionally, key component of the proton channel; it plays a direct role in the translocation of protons across the membrane. In Gloeobacter violaceus (strain ATCC 29082 / PCC 7421), this protein is ATP synthase subunit a.